We begin with the raw amino-acid sequence, 504 residues long: Maturase K (504 aa).

The protein belongs to the intron maturase 2 family. MatK subfamily.

The protein resides in the plastid. It localises to the chloroplast. Functionally, usually encoded in the trnK tRNA gene intron. Probably assists in splicing its own and other chloroplast group II introns. The protein is Maturase K of Quercus cerris (Turkey oak).